Reading from the N-terminus, the 505-residue chain is 2,3-bisphosphoglycerate-independent phosphoglycerate mutase (505 aa).

Mn(2+)-binding residues include D12 and S62. S62 serves as the catalytic Phosphoserine intermediate. Residues H123, 153–154 (RD), R185, R191, 257–260 (RPDR), and K330 each bind substrate. Mn(2+)-binding residues include D397, H401, D438, H439, and H456.

The protein belongs to the BPG-independent phosphoglycerate mutase family. As to quaternary structure, monomer. Mn(2+) is required as a cofactor.

It catalyses the reaction (2R)-2-phosphoglycerate = (2R)-3-phosphoglycerate. Its pathway is carbohydrate degradation; glycolysis; pyruvate from D-glyceraldehyde 3-phosphate: step 3/5. In terms of biological role, catalyzes the interconversion of 2-phosphoglycerate and 3-phosphoglycerate. This chain is 2,3-bisphosphoglycerate-independent phosphoglycerate mutase, found in Staphylococcus epidermidis (strain ATCC 35984 / DSM 28319 / BCRC 17069 / CCUG 31568 / BM 3577 / RP62A).